An 81-amino-acid chain; its full sequence is Small ribosomal subunit protein bS16 (81 aa).

This sequence belongs to the bacterial ribosomal protein bS16 family.

The chain is Small ribosomal subunit protein bS16 from Colwellia psychrerythraea (strain 34H / ATCC BAA-681) (Vibrio psychroerythus).